The following is a 263-amino-acid chain: 4-hydroxy-tetrahydrodipicolinate reductase (263 aa).

10 to 15 (GASGKM) contributes to the NAD(+) binding site. Arg-38 lines the NADP(+) pocket. NAD(+) is bound by residues 97 to 99 (GTT) and 123 to 126 (APNF). Catalysis depends on His-153, which acts as the Proton donor/acceptor. His-154 contributes to the (S)-2,3,4,5-tetrahydrodipicolinate binding site. The active-site Proton donor is Lys-157. Residue 163 to 164 (GT) coordinates (S)-2,3,4,5-tetrahydrodipicolinate.

Belongs to the DapB family.

The protein localises to the cytoplasm. It carries out the reaction (S)-2,3,4,5-tetrahydrodipicolinate + NAD(+) + H2O = (2S,4S)-4-hydroxy-2,3,4,5-tetrahydrodipicolinate + NADH + H(+). It catalyses the reaction (S)-2,3,4,5-tetrahydrodipicolinate + NADP(+) + H2O = (2S,4S)-4-hydroxy-2,3,4,5-tetrahydrodipicolinate + NADPH + H(+). It participates in amino-acid biosynthesis; L-lysine biosynthesis via DAP pathway; (S)-tetrahydrodipicolinate from L-aspartate: step 4/4. In terms of biological role, catalyzes the conversion of 4-hydroxy-tetrahydrodipicolinate (HTPA) to tetrahydrodipicolinate. This chain is 4-hydroxy-tetrahydrodipicolinate reductase, found in Dehalococcoides mccartyi (strain ATCC BAA-2266 / KCTC 15142 / 195) (Dehalococcoides ethenogenes (strain 195)).